We begin with the raw amino-acid sequence, 1080 residues long: Histone deacetylase 4 (1080 aa).

3 disordered regions span residues 1–25, 132–165, and 205–312; these read MSSQ…PPRV, KLEQ…ESAV, and TQHS…ISAE. Residues 132-162 are compositionally biased toward basic and acidic residues; sequence KLEQHRQEQELEKQHREQKLQQLKNKEKGKE. The segment covering 205-224 has biased composition (polar residues); it reads TQHSSLDQSSPPQSGVSGTY. Composition is skewed to basic and acidic residues over residues 233 to 244 and 258 to 273; these read DSKDDFPLRKTA and KVAE…RKDG. Over residues 289–312 the composition is skewed to low complexity; it reads SACNSAPGSGPSSPNNSSNNISAE. The PxLPxI/L motif lies at 348-353; sequence PSLPNI. Disordered stretches follow at residues 506 to 527, 558 to 579, and 622 to 646; these read KPNE…ELRE, EPIE…GQRQ, and PLSR…PTKP. Residues 509-527 are compositionally biased toward basic and acidic residues; the sequence is EPARQHESHPEETEEELRE. Residues 560 to 571 are compositionally biased toward acidic residues; the sequence is IESDEEEAEPQQ. Residues 625 to 637 are compositionally biased toward polar residues; that stretch reads RAQSSPASATFPM. Residues 651–1080 form a histone deacetylase region; sequence GLVYDTLMLK…DEPMEEEPPL (430 aa). Zn(2+)-binding residues include Cys663, Cys665, His671, and Cys747. The active site involves His799. A disordered region spans residues 1055–1080; the sequence is MASLSVGVKPAEKRPDDEPMEEEPPL.

Belongs to the histone deacetylase family. HD type 2 subfamily.

It localises to the nucleus. The enzyme catalyses N(6)-acetyl-L-lysyl-[histone] + H2O = L-lysyl-[histone] + acetate. In terms of biological role, responsible for the deacetylation of lysine residues on the N-terminal part of the core histones (H2A, H2B, H3 and H4). Histone deacetylation gives a tag for epigenetic repression and plays an important role in transcriptional regulation, cell cycle progression and developmental events. Histone deacetylases act via the formation of large multiprotein complexes. The sequence is that of Histone deacetylase 4 (HDAC4) from Gallus gallus (Chicken).